A 181-amino-acid chain; its full sequence is Regulator of G-protein signaling 5 (181 aa).

The RGS domain occupies 64-180; sequence SLDKLLQNNY…VRSEFYQEFI (117 aa).

The protein resides in the cytoplasm. Its subcellular location is the membrane. In terms of biological role, inhibits signal transduction by increasing the GTPase activity of G protein alpha subunits thereby driving them into their inactive GDP-bound form. Binds to G(i)-alpha and G(o)-alpha, but not to G(s)-alpha. The sequence is that of Regulator of G-protein signaling 5 (RGS5) from Sus scrofa (Pig).